The chain runs to 149 residues: 3-dehydroquinate dehydratase (149 aa).

The Proton acceptor role is filled by Y26. N75, H81, and D88 together coordinate substrate. The Proton donor role is filled by H101. Substrate-binding positions include 102-103 and R112; that span reads LS.

Belongs to the type-II 3-dehydroquinase family. Homododecamer.

The enzyme catalyses 3-dehydroquinate = 3-dehydroshikimate + H2O. The protein operates within metabolic intermediate biosynthesis; chorismate biosynthesis; chorismate from D-erythrose 4-phosphate and phosphoenolpyruvate: step 3/7. Catalyzes a trans-dehydration via an enolate intermediate. This chain is 3-dehydroquinate dehydratase, found in Shewanella woodyi (strain ATCC 51908 / MS32).